The sequence spans 210 residues: Na(+)-translocating NADH-quinone reductase subunit D (210 aa).

The next 5 membrane-spanning stretches (helical) occupy residues 42-62, 72-92, 103-123, 131-151, and 178-198; these read FVMT…VSLI, IIVQ…ILKA, VFVG…AFAM, LIDG…VGFF, and NGLM…IWAI.

The protein belongs to the NqrDE/RnfAE family. In terms of assembly, composed of six subunits; NqrA, NqrB, NqrC, NqrD, NqrE and NqrF.

The protein localises to the cell inner membrane. The catalysed reaction is a ubiquinone + n Na(+)(in) + NADH + H(+) = a ubiquinol + n Na(+)(out) + NAD(+). NQR complex catalyzes the reduction of ubiquinone-1 to ubiquinol by two successive reactions, coupled with the transport of Na(+) ions from the cytoplasm to the periplasm. NqrA to NqrE are probably involved in the second step, the conversion of ubisemiquinone to ubiquinol. The polypeptide is Na(+)-translocating NADH-quinone reductase subunit D (Vibrio vulnificus (strain CMCP6)).